The sequence spans 967 residues: Zinc finger protein with KRAB and SCAN domains 2 (967 aa).

Lysine 22 participates in a covalent cross-link: Glycyl lysine isopeptide (Lys-Gly) (interchain with G-Cter in SUMO2). Residues 45–127 (RKCFRQFCYE…ALVVHLEKET (83 aa)) form the SCAN box domain. The tract at residues 150–205 (WEVADFQPEQVETQPRAVSREEPGSLHSGHQEQLNRKRERRPLPKNARPSPWVPAL) is disordered. Over residues 167-185 (VSREEPGSLHSGHQEQLNR) the composition is skewed to basic and acidic residues. Residues 229–300 (VKDVHVARGF…GLHSSNKRSI (72 aa)) enclose the KRAB domain. Residues lysine 242, lysine 259, lysine 277, lysine 337, lysine 482, and lysine 529 each participate in a glycyl lysine isopeptide (Lys-Gly) (interchain with G-Cter in SUMO2) cross-link. Over residues 586-602 (RASAPSPSTPEEVPSPS) the composition is skewed to low complexity. The tract at residues 586 to 626 (RASAPSPSTPEEVPSPSRQERGGIEVEPQEPTGWEPEETSQ) is disordered. A phosphoserine mark is found at serine 591 and serine 600. Glycyl lysine isopeptide (Lys-Gly) (interchain with G-Cter in SUMO2) cross-links involve residues lysine 734, lysine 745, and lysine 752. 6 C2H2-type zinc fingers span residues 775 to 797 (YKCG…QRIH), 803 to 825 (FKCL…QRIH), 831 to 853 (YRCG…QRTH), 859 to 881 (YQCG…RRVH), 887 to 909 (YKCV…RRIH), and 915 to 937 (YGCA…REVH). The segment at 941–967 (KPLPHPPSLYCPENPHKGKTDEFRKTF) is disordered. Residues 954–967 (NPHKGKTDEFRKTF) are compositionally biased toward basic and acidic residues.

It belongs to the krueppel C2H2-type zinc-finger protein family.

The protein resides in the nucleus. May be involved in transcriptional regulation. The chain is Zinc finger protein with KRAB and SCAN domains 2 (ZKSCAN2) from Homo sapiens (Human).